A 358-amino-acid chain; its full sequence is Heme A synthase (358 aa).

A run of 8 helical transmembrane segments spans residues Leu-25–Gly-45, Leu-111–Gly-131, Met-141–Ser-161, Ile-176–Val-196, Phe-210–Gly-230, Val-269–Val-289, Thr-304–Met-324, and Ala-326–Val-346. His-273 lines the heme pocket. His-334 lines the heme pocket.

Belongs to the COX15/CtaA family. Type 2 subfamily. As to quaternary structure, interacts with CtaB. The cofactor is heme b.

Its subcellular location is the cell membrane. The catalysed reaction is Fe(II)-heme o + 2 A + H2O = Fe(II)-heme a + 2 AH2. Its pathway is porphyrin-containing compound metabolism; heme A biosynthesis; heme A from heme O: step 1/1. Functionally, catalyzes the conversion of heme O to heme A by two successive hydroxylations of the methyl group at C8. The first hydroxylation forms heme I, the second hydroxylation results in an unstable dihydroxymethyl group, which spontaneously dehydrates, resulting in the formyl group of heme A. In Brucella suis (strain ATCC 23445 / NCTC 10510), this protein is Heme A synthase.